The chain runs to 118 residues: MRSKFKDEHPFEKRKAEAERIRAKYADRIPVICEKVEKSDIATIDKKKYLVPADLTVGQFVYVIRKRIKLSPEKAIFIFVDEVLPPTAALMSSIYEEHKDEDGFLYITYSGENTFGDC.

A lipid anchor (Phosphatidylethanolamine amidated glycine) is attached at glycine 116. The propeptide at 117–118 (DC) is removed in mature form.

This sequence belongs to the ATG8 family. Post-translationally, the C-terminal 2 residues are removed by ATG4 to expose Gly-116 at the C-terminus. The C-terminal Gly is then amidated with phosphatidylethanolamine by an activating system similar to that for ubiquitin.

The protein resides in the cytoplasmic vesicle. Its subcellular location is the autophagosome membrane. The protein localises to the vacuole membrane. It localises to the preautophagosomal structure membrane. Its function is as follows. Ubiquitin-like modifier involved in autophagosome formation. With atg4, mediates the delivery of the autophagosomes to the vacuole via the microtubule cytoskeleton. Required for selective autophagic degradation of the nucleus (nucleophagy) as well as for mitophagy which contributes to regulate mitochondrial quantity and quality by eliminating the mitochondria to a basal level to fulfill cellular energy requirements and preventing excess ROS production. Participates also in membrane fusion events that take place in the early secretory pathway. Also involved in endoplasmic reticulum-specific autophagic process and is essential for the survival of cells subjected to severe ER stress. The atg8-PE conjugate mediates tethering between adjacent membranes and stimulates membrane hemifusion, leading to expansion of the autophagosomal membrane during autophagy. The polypeptide is Autophagy-related protein 8 (atg8) (Emericella nidulans (strain FGSC A4 / ATCC 38163 / CBS 112.46 / NRRL 194 / M139) (Aspergillus nidulans)).